The primary structure comprises 718 residues: MILCLRLCLRASRSFFSISTTNNNNNLSRFLFRFSTLPHCAASSSSSSSNLESYYANLILSSHGDSNKPNRKWSSHQFRLLLTDPNLLIRVLNMIRVKPEIAFRFFNWIQRQSDVKQSRQAFAAMLEILAENDLMSEAYLVAERSIDLGMHEIDDLLIDGSFDKLIALKLLDLLLWVYTKKSMAEKFLLSFEKMIRKGFLPSVRNCNIVLKVLRDSRMMNKASAVYETMIEHGIMPTVITFNTMLDSCFKAGDLERVDKIWLEMKRRNIEFSEVTYNILINGFSKNGKMEEARRFHGDMRRSGFAVTPYSFNPLIEGYCKQGLFDDAWGVTDEMLNAGIYPTTSTYNIYICALCDFGRIDDARELLSSMAAPDVVSYNTLMHGYIKMGKFVEASLLFDDLRAGDIHPSIVTYNTLIDGLCESGNLEGAQRLKEEMTTQLIFPDVITYTTLVKGFVKNGNLSMATEVYDEMLRKGIKPDGYAYTTRAVGELRLGDSDKAFRLHEEMVATDHHAPDLTIYNVRIDGLCKVGNLVKAIEFQRKIFRVGLVPDHVTYTTVIRGYLENGQFKMARNLYDEMLRKRLYPSVITYFVLIYGHAKAGRLEQAFQYSTEMKKRGVRPNVMTHNALLYGMCKAGNIDEAYRYLCKMEEEGIPPNKYSYTMLISKNCDFEKWEEVVKLYKEMLDKEIEPDGYTHRALFKHLEKDHESREVEFLERLLLS.

Residues 1–11 (MILCLRLCLRA) constitute a mitochondrion transit peptide. PPR repeat units lie at residues 167–201 (ALKL…GFLP), 202–236 (SVRN…GIMP), 237–271 (TVIT…NIEF), 272–306 (SEVT…GFAV), 307–341 (TPYS…GIYP), 342–372 (TTST…MAAP), 373–407 (DVVS…DIHP), 408–442 (SIVT…LIFP), 443–477 (DVIT…GIKP), 478–512 (DGYA…DHHA), 514–548 (DLTI…GLVP), 549–583 (DHVT…RLYP), 584–618 (SVIT…GVRP), 619–653 (NVMT…GIPP), and 654–688 (NKYS…EIEP).

Belongs to the PPR family. P subfamily.

The protein localises to the mitochondrion. The chain is Pentatricopeptide repeat-containing protein At1g22960, mitochondrial from Arabidopsis thaliana (Mouse-ear cress).